The sequence spans 573 residues: Delta 8-(E)-sphingolipid desaturase (573 aa).

In terms of domain architecture, Cytochrome b5 heme-binding spans 2–77 (SRVLSRRDIA…FKIWKIGRID (76 aa)). Residues histidine 37 and histidine 60 each contribute to the heme site. The helical transmembrane segment at 228-248 (LFGISFYLLSLKWFAISAICL) threads the bilayer. The Histidine box-1 signature appears at 260 to 264 (HDAGH). A helical membrane pass occupies residues 273–293 (VDNIIGMTVASWIGGLSLGWW). A Histidine box-2 motif is present at residues 297-301 (HNVHH). The next 3 membrane-spanning stretches (helical) occupy residues 353–372 (YLYYPILCFGRFNLYRLSWM), 393–413 (LAGLSFFNYWFFYLIIYKQMP), and 422–442 (VMISHIATMIVHVQITLSHFA). Residues 481-485 (QVIHH) carry the Histidine box-3 motif.

This sequence belongs to the fatty acid desaturase type 1 family.

It is found in the membrane. The enzyme catalyses an N-acylsphing-4-enine + 2 Fe(II)-[cytochrome b5] + O2 + 2 H(+) = a (4E,8E)-4-sphinga-4,8-dienine ceramide + 2 Fe(III)-[cytochrome b5] + 2 H2O. It functions in the pathway lipid metabolism; sphingolipid metabolism. Its function is as follows. Delta(8)-fatty-acid desaturase which introduces a double bond at the 8-position in the long-chain base (LCB) of ceramides. Required for the formation of the di-unsaturated sphingoid base (E,E)-sphinga-4,8-dienine during glucosylceramide (GluCer) biosynthesis. This chain is Delta 8-(E)-sphingolipid desaturase, found in Kluyveromyces lactis (strain ATCC 8585 / CBS 2359 / DSM 70799 / NBRC 1267 / NRRL Y-1140 / WM37) (Yeast).